A 339-amino-acid polypeptide reads, in one-letter code: Ketol-acid reductoisomerase (NADP(+)) (339 aa).

Residues 1–182 (MRVYYDRDAD…GGGRAGIIET (182 aa)) form the KARI N-terminal Rossmann domain. NADP(+) is bound by residues 24–27 (YGSQ), arginine 48, serine 51, serine 53, and 83–86 (DELQ). The active site involves histidine 108. Glycine 134 is an NADP(+) binding site. Positions 183-328 (TFKEECETDL…ARLRDMMPWI (146 aa)) constitute a KARI C-terminal knotted domain. Mg(2+) contacts are provided by aspartate 191, glutamate 195, glutamate 227, and glutamate 231. Position 252 (serine 252) interacts with substrate.

Belongs to the ketol-acid reductoisomerase family. The cofactor is Mg(2+).

It carries out the reaction (2R)-2,3-dihydroxy-3-methylbutanoate + NADP(+) = (2S)-2-acetolactate + NADPH + H(+). It catalyses the reaction (2R,3R)-2,3-dihydroxy-3-methylpentanoate + NADP(+) = (S)-2-ethyl-2-hydroxy-3-oxobutanoate + NADPH + H(+). The protein operates within amino-acid biosynthesis; L-isoleucine biosynthesis; L-isoleucine from 2-oxobutanoate: step 2/4. It participates in amino-acid biosynthesis; L-valine biosynthesis; L-valine from pyruvate: step 2/4. Its function is as follows. Involved in the biosynthesis of branched-chain amino acids (BCAA). Catalyzes an alkyl-migration followed by a ketol-acid reduction of (S)-2-acetolactate (S2AL) to yield (R)-2,3-dihydroxy-isovalerate. In the isomerase reaction, S2AL is rearranged via a Mg-dependent methyl migration to produce 3-hydroxy-3-methyl-2-ketobutyrate (HMKB). In the reductase reaction, this 2-ketoacid undergoes a metal-dependent reduction by NADPH to yield (R)-2,3-dihydroxy-isovalerate. The polypeptide is Ketol-acid reductoisomerase (NADP(+)) (Bradyrhizobium sp. (strain ORS 278)).